The sequence spans 359 residues: RNA-binding protein 4B (359 aa).

RRM domains are found at residues 2-72 and 78-148; these read VKLF…ASKN and TKLH…LSTS. Residues 160-177 form a CCHC-type zinc finger; that stretch reads SGCYRCGKEGHWSKECPV. The interval 196 to 359 is interaction with TNPO3; the sequence is AVRTPYTMGY…YVDRARYSAF (164 aa).

As to quaternary structure, interacts with TNPO3, which may mediate nuclear import of the protein. As to expression, expressed in liver and kidney (at protein level). Ubiquitously expressed.

It localises to the nucleus. The protein localises to the nucleolus. Functionally, required for the translational activation of PER1 mRNA in response to circadian clock. Binds directly to the 3'-UTR of the PER1 mRNA. This is RNA-binding protein 4B (RBM4B) from Homo sapiens (Human).